Reading from the N-terminus, the 160-residue chain is Cyanate hydratase (160 aa).

Catalysis depends on residues Arg100, Glu103, and Ser126.

Belongs to the cyanase family.

It catalyses the reaction cyanate + hydrogencarbonate + 3 H(+) = NH4(+) + 2 CO2. Its function is as follows. Catalyzes the reaction of cyanate with bicarbonate to produce ammonia and carbon dioxide. This Aspergillus niger (strain ATCC MYA-4892 / CBS 513.88 / FGSC A1513) protein is Cyanate hydratase.